Reading from the N-terminus, the 224-residue chain is tRNA (guanine-N(7)-)-methyltransferase (224 aa).

Glu-57, Asp-82, and Asp-109 together coordinate S-adenosyl-L-methionine. Asp-167 is a binding site for substrate.

The protein belongs to the class I-like SAM-binding methyltransferase superfamily. TrmB family.

The enzyme catalyses guanosine(46) in tRNA + S-adenosyl-L-methionine = N(7)-methylguanosine(46) in tRNA + S-adenosyl-L-homocysteine. The protein operates within tRNA modification; N(7)-methylguanine-tRNA biosynthesis. Its function is as follows. Catalyzes the formation of N(7)-methylguanine at position 46 (m7G46) in tRNA. The chain is tRNA (guanine-N(7)-)-methyltransferase from Chloroflexus aurantiacus (strain ATCC 29366 / DSM 635 / J-10-fl).